We begin with the raw amino-acid sequence, 1808 residues long: Tenascin (1808 aa).

Residues 1–22 (MGLPSQVLACAILGLLYQHASG) form the signal peptide. Positions 23-33 (GLIKRIIRQKR) are excised as a propeptide. The N-linked (GlcNAc...) asparagine glycan is linked to asparagine 38. An O-linked (Xyl...) (chondroitin sulfate) serine glycan is attached at serine 72. Residues 118 to 142 (DIKDLLSRLEELEGLVSSLREQCAS) are a coiled coil. Asparagine 168 and asparagine 186 each carry an N-linked (GlcNAc...) asparagine glycan. Residues 176 to 188 (CVCEPGWKGPNCS) form the EGF-like 1; incomplete domain. 13 EGF-like domains span residues 188-219 (SEPACPRNCLNRGLCVRGKCICEEGFTGEDCS), 219-250 (SQAACPSDCNDQGKCVDGVCVCFEGYTGPDCG), 250-281 (GEELCPHGCGIHGRCVGGRCVCHEGFTGEDCN), 281-312 (NEPLCPNNCHNRGRCVDNECVCDEGYTGEDCG), 312-343 (GELICPNDCFDRGRCINGTCFCEEGYTGEDCG), 343-374 (GELTCPNNCNGNGRCENGLCVCHEGFVGDDCS), 374-405 (SQKRCPKDCNNRGHCVDGRCVCHEGYLGEDCG), 405-436 (GELRCPNDCHNRGRCINGQCVCDEGFIGEDCG), 436-467 (GELRCPNDCHNRGRCVNGQCECHEGFIGEDCG), 467-498 (GELRCPNDCNSHGRCVNGQCVCDEGYTGEDCG), 498-529 (GELRCPNDCHNRGRCVEGRCVCDNGFMGEDCG), 529-560 (GELSCPNDCHQHGRCVDGRCVCHEGFTGEDCR), and 560-591 (RERSCPNDCNNVGRCVEGRCVCEEGYMGIDCS). Intrachain disulfides connect cysteine 192/cysteine 202, cysteine 196/cysteine 207, cysteine 209/cysteine 218, cysteine 223/cysteine 233, cysteine 227/cysteine 238, cysteine 240/cysteine 249, cysteine 254/cysteine 264, cysteine 258/cysteine 269, cysteine 271/cysteine 280, cysteine 285/cysteine 295, cysteine 289/cysteine 300, cysteine 302/cysteine 311, cysteine 316/cysteine 326, cysteine 320/cysteine 331, cysteine 333/cysteine 342, cysteine 347/cysteine 357, cysteine 351/cysteine 362, cysteine 364/cysteine 373, cysteine 378/cysteine 388, cysteine 382/cysteine 393, cysteine 395/cysteine 404, cysteine 409/cysteine 419, cysteine 413/cysteine 424, cysteine 426/cysteine 435, cysteine 440/cysteine 450, cysteine 444/cysteine 455, cysteine 457/cysteine 466, cysteine 471/cysteine 481, cysteine 475/cysteine 486, cysteine 488/cysteine 497, cysteine 502/cysteine 512, cysteine 506/cysteine 517, cysteine 519/cysteine 528, cysteine 533/cysteine 543, cysteine 537/cysteine 548, cysteine 550/cysteine 559, cysteine 564/cysteine 574, cysteine 568/cysteine 579, and cysteine 581/cysteine 590. Asparagine 328 carries N-linked (GlcNAc...) asparagine glycosylation. Fibronectin type-III domains follow at residues 595 to 685 (PPTE…LPAP), 686 to 775 (EGLK…TKLD), 776 to 866 (APSQ…DLDA), 867 to 957 (PRNL…TDLD), 958 to 1046 (NPKD…EEEP), 1047 to 1138 (ELGN…AHPE), 1139 to 1228 (VGEL…EAEP), 1229 to 1318 (EVDN…TVVG), 1319 to 1408 (SPKG…ALDS), 1409 to 1495 (PSGL…TGLD), and 1496 to 1584 (APKD…TGLL). N-linked (GlcNAc...) asparagine glycosylation is found at asparagine 603, asparagine 643, asparagine 751, and asparagine 759. 6 N-linked (GlcNAc...) asparagine glycosylation sites follow: asparagine 1050, asparagine 1090, asparagine 1101, asparagine 1112, asparagine 1153, and asparagine 1183. A glycan (N-linked (GlcNAc...) asparagine) is linked at asparagine 1416. The Fibrinogen C-terminal domain occupies 1582–1797 (GLLYPYPKDC…FAEMKLRPSS (216 aa)). Asparagine 1736 and asparagine 1769 each carry an N-linked (GlcNAc...) asparagine glycan.

Belongs to the tenascin family. Homohexamer; disulfide-linked. A homotrimer may be formed in the triple coiled-coil region and may be stabilized by disulfide rings at both ends. Two of such half-hexabrachions may be disulfide linked within the central globule. Interacts with CSPG5. In terms of tissue distribution, expressed in the brain.

The protein localises to the secreted. It localises to the extracellular space. It is found in the extracellular matrix. Its function is as follows. Extracellular matrix protein implicated in guidance of migrating neurons as well as axons during development, synaptic plasticity as well as neuronal regeneration. Ligand for integrins alpha-8/beta-1, alpha-9/beta-1, alpha-V/beta-3 and alpha-V/beta-6. This is Tenascin (TNC) from Gallus gallus (Chicken).